The primary structure comprises 217 residues: 3-demethoxyubiquinol 3-hydroxylase (217 aa).

Residues Glu-66, Glu-96, His-99, Glu-148, Glu-180, and His-183 each contribute to the Fe cation site.

Belongs to the COQ7 family. Fe cation serves as cofactor.

The protein localises to the cell membrane. The catalysed reaction is a 5-methoxy-2-methyl-3-(all-trans-polyprenyl)benzene-1,4-diol + AH2 + O2 = a 3-demethylubiquinol + A + H2O. The protein operates within cofactor biosynthesis; ubiquinone biosynthesis. Its function is as follows. Catalyzes the hydroxylation of 2-nonaprenyl-3-methyl-6-methoxy-1,4-benzoquinol during ubiquinone biosynthesis. The polypeptide is 3-demethoxyubiquinol 3-hydroxylase (Xylella fastidiosa (strain Temecula1 / ATCC 700964)).